The following is a 410-amino-acid chain: Histidine--tRNA ligase (410 aa).

This sequence belongs to the class-II aminoacyl-tRNA synthetase family. As to quaternary structure, homodimer.

The protein resides in the cytoplasm. The enzyme catalyses tRNA(His) + L-histidine + ATP = L-histidyl-tRNA(His) + AMP + diphosphate + H(+). In Campylobacter hominis (strain ATCC BAA-381 / DSM 21671 / CCUG 45161 / LMG 19568 / NCTC 13146 / CH001A), this protein is Histidine--tRNA ligase.